Reading from the N-terminus, the 246-residue chain is Probable transcriptional regulatory protein GK2594 (246 aa).

Belongs to the TACO1 family.

It localises to the cytoplasm. The polypeptide is Probable transcriptional regulatory protein GK2594 (Geobacillus kaustophilus (strain HTA426)).